Consider the following 497-residue polypeptide: tRNA (adenine(58)-N(1))-methyltransferase non-catalytic subunit TRM6 (497 aa).

The disordered stretch occupies residues 69–102 (TNGGSLQPKKKKEEPTSETKEAGTDNRNIIDDGK). Residues 79–102 (KKEEPTSETKEAGTDNRNIIDDGK) are compositionally biased toward basic and acidic residues. The tract at residues 94–104 (NRNIIDDGKSQ) is substrate. Position 107 is a phosphothreonine (T107). 2 substrate regions span residues 145–154 (KYIKKKKKKY) and 175–182 (REPGKINH). Residues 276-354 (SSEPKDIASV…EKQRRQEEQK (79 aa)) are disordered. A phosphoserine mark is found at S298 and S305. Over residues 311 to 354 (ESNHPEEQERMEIVSQDPDYKEPKESGSKKDYIQEKQRRQEEQK) the composition is skewed to basic and acidic residues. Residues R349 and R377 each coordinate substrate. 2 substrate regions span residues 415-423 (RERGGVINL) and 434-441 (QVLPDRSH). A disordered region spans residues 468 to 497 (PSLKSSTSTLESHKTEEPAAKKRKCPESDS). Residues 478–497 (ESHKTEEPAAKKRKCPESDS) show a composition bias toward basic and acidic residues.

This sequence belongs to the TRM6/GCD10 family. As to quaternary structure, heterotetramer; composed of two copies of TRMT6 and two copies of TRMT61A.

Its subcellular location is the nucleus. Its function is as follows. Substrate-binding subunit of tRNA (adenine-N(1)-)-methyltransferase, which catalyzes the formation of N(1)-methyladenine at position 58 (m1A58) in initiator methionyl-tRNA. Together with the TRMT61A catalytic subunit, part of a mRNA N(1)-methyltransferase complex that mediates methylation of adenosine residues at the N(1) position of a small subset of mRNAs: N(1) methylation takes place in tRNA T-loop-like structures of mRNAs and is only present at low stoichiometries. The sequence is that of tRNA (adenine(58)-N(1))-methyltransferase non-catalytic subunit TRM6 (TRMT6) from Bos taurus (Bovine).